We begin with the raw amino-acid sequence, 228 residues long: Translin (228 aa).

Residues 86 to 90 are DNA/RNA binding; that stretch reads RFHEH. Residues 177-198 are leucine-zipper; sequence LDSGFRLLNLKNDSLRKRYDGL. Lys187 is subject to N6-acetyllysine. Phosphoserine is present on Ser190. Lys199 is subject to N6-acetyllysine.

Belongs to the translin family. Ring-shaped heterooctamer of six TSN and two TSNAX subunits, DNA/RNA binding occurs inside the ring.

It localises to the cytoplasm. Its subcellular location is the nucleus. In terms of biological role, DNA-binding protein that specifically recognizes consensus sequences at the breakpoint junctions in chromosomal translocations, mostly involving immunoglobulin (Ig)/T-cell receptor gene segments. Seems to recognize single-stranded DNA ends generated by staggered breaks occurring at recombination hot spots. Functionally, exhibits both single-stranded and double-stranded endoribonuclease activity. May act as an activator of RNA-induced silencing complex (RISC) by facilitating endonucleolytic cleavage of the siRNA passenger strand. This Homo sapiens (Human) protein is Translin.